The chain runs to 309 residues: Taste receptor type 2 member 46 (309 aa).

A topological domain (extracellular) is located at residue Met-1. The chain crosses the membrane as a helical span at residues 2 to 22 (ITFLPIIFSILIVVTFVIGNF). At 23–46 (ANGFIALANSIEWFKRQKISFADQ) the chain is on the cytoplasmic side. The helical transmembrane segment at 47-67 (ILTALAVSRVGLLWVLLLNWY) threads the bilayer. Residues 68–86 (ATELNPAFYSIEVRITAYN) lie on the Extracellular side of the membrane. The chain crosses the membrane as a helical span at residues 87–107 (LWAVINHFSNWLATSLSIFYL). Topologically, residues 108 to 126 (LKIANFSNLIFLRLKRRVK) are cytoplasmic. Residues 127–147 (SVVLVILLGPLLFLVCHLFVI) traverse the membrane as a helical segment. Topologically, residues 148-178 (NMNQIIWTKEYEGNMTWKIKLRSAMYLSNIT) are extracellular. N-linked (GlcNAc...) asparagine glycosylation is found at Asn-161 and Asn-176. A helical membrane pass occupies residues 179-199 (VTILANLVPFTLTLISFLLLI). Residues 200-229 (CSLCKHLKKMQLHGKGSQDPSMKVHIKALQ) lie on the Cytoplasmic side of the membrane. Residues 230-250 (TVTSFLLLCAIYFLSIIMSVW) traverse the membrane as a helical segment. Residues 251–259 (SFESLENKP) lie on the Extracellular side of the membrane. Residues 260–280 (VFMFCEAITFSYPSTHPFILI) form a helical membrane-spanning segment. Residues 281–309 (WGNKKLKQTFLSVLWHVRYWVKGEEPSSP) lie on the Cytoplasmic side of the membrane.

It belongs to the G-protein coupled receptor T2R family.

It is found in the membrane. It localises to the cell projection. The protein localises to the cilium membrane. Its function is as follows. Receptor that may play a role in the perception of bitterness and is gustducin-linked. May play a role in sensing the chemical composition of the gastrointestinal content. The activity of this receptor may stimulate alpha gustducin, mediate PLC-beta-2 activation and lead to the gating of TRPM5. In airway epithelial cells, binding of bitter compounds increases the intracellular calcium ion concentration and stimulates ciliary beat frequency. The protein is Taste receptor type 2 member 46 (TAS2R46) of Pan paniscus (Pygmy chimpanzee).